The sequence spans 1051 residues: Carbamoyl phosphate synthase large chain (1051 aa).

Residues 1–399 are carboxyphosphate synthetic domain; the sequence is MRETPKKVLV…SLQKAIRMLD (399 aa). Positions 127, 167, 173, 174, 206, 208, 213, 239, 240, 241, 282, and 296 each coordinate ATP. Residues 131 to 325 enclose the ATP-grasp 1 domain; the sequence is RETMIENNLP…LAYVSAKLAL (195 aa). The Mg(2+) site is built by Q282, E296, and N298. Mn(2+)-binding residues include Q282, E296, and N298. Residues 400-548 form an oligomerization domain region; that stretch reads IGEPGVVGGK…LTYNGTEDDI (149 aa). The segment at 549-930 is carbamoyl phosphate synthetic domain; that stretch reads EFSQGNKLLI…LKSWLSSMPN (382 aa). In terms of domain architecture, ATP-grasp 2 spans 673-863; that stretch reads SKLLDKLGIS…LINESMKAIF (191 aa). Residues R709, K748, I750, E755, G779, V780, H781, S782, Q822, and E834 each coordinate ATP. Mg(2+) is bound by residues Q822, E834, and N836. Mn(2+)-binding residues include Q822, E834, and N836. Residues 930-1051 enclose the MGS-like domain; it reads NRIPNKNGIA…FEISEYGGGI (122 aa). Residues 931 to 1051 are allosteric domain; that stretch reads RIPNKNGIAL…FEISEYGGGI (121 aa).

The protein belongs to the CarB family. In terms of assembly, composed of two chains; the small (or glutamine) chain promotes the hydrolysis of glutamine to ammonia, which is used by the large (or ammonia) chain to synthesize carbamoyl phosphate. Tetramer of heterodimers (alpha,beta)4. Mg(2+) is required as a cofactor. Requires Mn(2+) as cofactor.

The enzyme catalyses hydrogencarbonate + L-glutamine + 2 ATP + H2O = carbamoyl phosphate + L-glutamate + 2 ADP + phosphate + 2 H(+). It carries out the reaction hydrogencarbonate + NH4(+) + 2 ATP = carbamoyl phosphate + 2 ADP + phosphate + 2 H(+). Its pathway is amino-acid biosynthesis; L-arginine biosynthesis; carbamoyl phosphate from bicarbonate: step 1/1. It functions in the pathway pyrimidine metabolism; UMP biosynthesis via de novo pathway; (S)-dihydroorotate from bicarbonate: step 1/3. Its function is as follows. Large subunit of the glutamine-dependent carbamoyl phosphate synthetase (CPSase). CPSase catalyzes the formation of carbamoyl phosphate from the ammonia moiety of glutamine, carbonate, and phosphate donated by ATP, constituting the first step of 2 biosynthetic pathways, one leading to arginine and/or urea and the other to pyrimidine nucleotides. The large subunit (synthetase) binds the substrates ammonia (free or transferred from glutamine from the small subunit), hydrogencarbonate and ATP and carries out an ATP-coupled ligase reaction, activating hydrogencarbonate by forming carboxy phosphate which reacts with ammonia to form carbamoyl phosphate. This is Carbamoyl phosphate synthase large chain from Saccharolobus solfataricus (strain ATCC 35092 / DSM 1617 / JCM 11322 / P2) (Sulfolobus solfataricus).